The primary structure comprises 206 residues: MAKKPSIELPPFEIPAGYALIAGVDEVGRGPLVGDVVTAAVILDPNRPIMGLNDSKKLSEKKRLALFPEIQVKALAWAVGRCSPQEIDELNIFQATMVAMQRAVAGLRIQPDLVLIDGNKIPKLPMEAQAVVKGDLRVAQISAASIIAKVIRDQEMEALDKQYPQFGFAKHKGYPTAAHFAAIEQHGVIEQHRKSFGPVKRALGIE.

In terms of domain architecture, RNase H type-2 spans 19–206 (ALIAGVDEVG…GPVKRALGIE (188 aa)). Residues D25, E26, and D117 each contribute to the a divalent metal cation site.

Belongs to the RNase HII family. Mn(2+) is required as a cofactor. It depends on Mg(2+) as a cofactor.

Its subcellular location is the cytoplasm. It catalyses the reaction Endonucleolytic cleavage to 5'-phosphomonoester.. Endonuclease that specifically degrades the RNA of RNA-DNA hybrids. The chain is Ribonuclease HII from Vibrio cholerae serotype O1 (strain M66-2).